A 245-amino-acid chain; its full sequence is Myozenin-3 (245 aa).

Position 31 is a phosphoserine (S31). Positions 50-67 (LLFQKRQRRVQKFTFELS) are binding to ACTN2, PPP3CA and TCAP. A binding to FLNC region spans residues 67 to 108 (SESLQAILASSARGKVAGRAAQATVPNGLEEQNHHSETHVFQ). The segment at 93 to 134 (NGLEEQNHHSETHVFQGSPGDPGITHLGAAGTGSVRSPSALA) is disordered. Positions 180–201 (PIPRDYRNFNKTPVPFGGPHVR) are binding to ACTN2.

This sequence belongs to the myozenin family. In terms of assembly, interacts with ACTN2, LDB3, FLNC, PPP3CA and TCAP. Expressed specifically in skeletal muscle and is enriched in fast-twitch muscle fibers. Not detected in heart.

The protein localises to the cytoplasm. It localises to the myofibril. The protein resides in the sarcomere. Its subcellular location is the z line. In terms of biological role, myozenins may serve as intracellular binding proteins involved in linking Z line proteins such as alpha-actinin, gamma-filamin, TCAP/telethonin, LDB3/ZASP and localizing calcineurin signaling to the sarcomere. Plays an important role in the modulation of calcineurin signaling. May play a role in myofibrillogenesis. The sequence is that of Myozenin-3 from Mus musculus (Mouse).